A 285-amino-acid polypeptide reads, in one-letter code: ATP phosphoribosyltransferase (285 aa).

The protein belongs to the ATP phosphoribosyltransferase family. Long subfamily. Mg(2+) is required as a cofactor.

Its subcellular location is the cytoplasm. The catalysed reaction is 1-(5-phospho-beta-D-ribosyl)-ATP + diphosphate = 5-phospho-alpha-D-ribose 1-diphosphate + ATP. It participates in amino-acid biosynthesis; L-histidine biosynthesis; L-histidine from 5-phospho-alpha-D-ribose 1-diphosphate: step 1/9. Its activity is regulated as follows. Feedback inhibited by histidine. Its function is as follows. Catalyzes the condensation of ATP and 5-phosphoribose 1-diphosphate to form N'-(5'-phosphoribosyl)-ATP (PR-ATP). Has a crucial role in the pathway because the rate of histidine biosynthesis seems to be controlled primarily by regulation of HisG enzymatic activity. This Streptomyces coelicolor (strain ATCC BAA-471 / A3(2) / M145) protein is ATP phosphoribosyltransferase.